We begin with the raw amino-acid sequence, 490 residues long: GTPase Der (490 aa).

EngA-type G domains lie at 3–166 (PVVA…MDDV) and 203–376 (IKLA…DSST). Residues 9–16 (GRPNVGKS), 56–60 (DTGGI), 118–121 (NKTD), 209–216 (GRPNVGKS), 256–260 (DTAGV), and 321–324 (NKWD) contribute to the GTP site. Residues 377–461 (RRVSTAMLTR…PIRIQFKEGE (85 aa)) enclose the KH-like domain.

Belongs to the TRAFAC class TrmE-Era-EngA-EngB-Septin-like GTPase superfamily. EngA (Der) GTPase family. Associates with the 50S ribosomal subunit.

In terms of biological role, GTPase that plays an essential role in the late steps of ribosome biogenesis. This Salmonella newport (strain SL254) protein is GTPase Der.